A 448-amino-acid chain; its full sequence is Phosphohexose mutases (448 aa).

Serine 97 functions as the Phosphoserine intermediate in the catalytic mechanism. Mg(2+) contacts are provided by serine 97, aspartate 237, aspartate 239, and aspartate 241.

It belongs to the phosphohexose mutase family. Mg(2+) serves as cofactor.

It catalyses the reaction alpha-D-glucose 1-phosphate = alpha-D-glucose 6-phosphate. The catalysed reaction is alpha-D-mannose 1-phosphate = D-mannose 6-phosphate. The protein operates within nucleotide-sugar biosynthesis; GDP-alpha-D-mannose biosynthesis; alpha-D-mannose 1-phosphate from D-fructose 6-phosphate: step 2/2. Involved in xanthan production. The protein is Phosphohexose mutases (xanA) of Xanthomonas campestris pv. campestris (strain B100).